A 310-amino-acid chain; its full sequence is N-acetyl-gamma-glutamyl-phosphate reductase (310 aa).

The active site involves C117.

It belongs to the NAGSA dehydrogenase family. Type 2 subfamily.

The protein resides in the cytoplasm. It catalyses the reaction N-acetyl-L-glutamate 5-semialdehyde + phosphate + NADP(+) = N-acetyl-L-glutamyl 5-phosphate + NADPH + H(+). It functions in the pathway amino-acid biosynthesis; L-arginine biosynthesis; N(2)-acetyl-L-ornithine from L-glutamate: step 3/4. Its function is as follows. Catalyzes the NADPH-dependent reduction of N-acetyl-5-glutamyl phosphate to yield N-acetyl-L-glutamate 5-semialdehyde. The protein is N-acetyl-gamma-glutamyl-phosphate reductase of Rhizobium rhizogenes (strain K84 / ATCC BAA-868) (Agrobacterium radiobacter).